The sequence spans 315 residues: Ribosomal RNA small subunit methyltransferase H (315 aa).

S-adenosyl-L-methionine contacts are provided by residues 33–35 (GGH), aspartate 52, phenylalanine 84, aspartate 106, and glutamine 113. A disordered region spans residues 290 to 315 (PITASTSELENNNRSHSAKLRVAEKL). The span at 292-304 (TASTSELENNNRS) shows a compositional bias: polar residues.

Belongs to the methyltransferase superfamily. RsmH family.

It localises to the cytoplasm. The catalysed reaction is cytidine(1402) in 16S rRNA + S-adenosyl-L-methionine = N(4)-methylcytidine(1402) in 16S rRNA + S-adenosyl-L-homocysteine + H(+). In terms of biological role, specifically methylates the N4 position of cytidine in position 1402 (C1402) of 16S rRNA. This Lactobacillus helveticus (strain DPC 4571) protein is Ribosomal RNA small subunit methyltransferase H.